We begin with the raw amino-acid sequence, 139 residues long: 3-hydroxyacyl-[acyl-carrier-protein] dehydratase FabZ (139 aa).

The active site involves H46.

The protein belongs to the thioester dehydratase family. FabZ subfamily.

Its subcellular location is the cytoplasm. The catalysed reaction is a (3R)-hydroxyacyl-[ACP] = a (2E)-enoyl-[ACP] + H2O. Functionally, involved in unsaturated fatty acids biosynthesis. Catalyzes the dehydration of short chain beta-hydroxyacyl-ACPs and long chain saturated and unsaturated beta-hydroxyacyl-ACPs. This chain is 3-hydroxyacyl-[acyl-carrier-protein] dehydratase FabZ, found in Petrotoga mobilis (strain DSM 10674 / SJ95).